We begin with the raw amino-acid sequence, 912 residues long: LPS-assembly protein LptD (912 aa).

An N-terminal signal peptide occupies residues 1–27 (MLYSPLYQSIRLILFGALGLSSLTVSA).

It belongs to the LptD family. Component of the lipopolysaccharide transport and assembly complex. Interacts with LptE and LptA.

It localises to the cell outer membrane. In terms of biological role, together with LptE, is involved in the assembly of lipopolysaccharide (LPS) at the surface of the outer membrane. This Psychrobacter arcticus (strain DSM 17307 / VKM B-2377 / 273-4) protein is LPS-assembly protein LptD.